Consider the following 148-residue polypeptide: Large ribosomal subunit protein bL9 (148 aa).

Belongs to the bacterial ribosomal protein bL9 family.

In terms of biological role, binds to the 23S rRNA. This Caldicellulosiruptor bescii (strain ATCC BAA-1888 / DSM 6725 / KCTC 15123 / Z-1320) (Anaerocellum thermophilum) protein is Large ribosomal subunit protein bL9.